A 107-amino-acid chain; its full sequence is Small ribosomal subunit protein bS6 (107 aa).

The protein belongs to the bacterial ribosomal protein bS6 family.

Functionally, binds together with bS18 to 16S ribosomal RNA. The protein is Small ribosomal subunit protein bS6 of Synechococcus elongatus (strain ATCC 33912 / PCC 7942 / FACHB-805) (Anacystis nidulans R2).